The chain runs to 356 residues: 1-deoxy-D-xylulose 5-phosphate reductoisomerase (356 aa).

Positions 7, 8, 9, 10, 31, 33, and 111 each coordinate NADPH. Position 112 (K112) interacts with 1-deoxy-D-xylulose 5-phosphate. NADPH is bound at residue E113. D131 serves as a coordination point for Mn(2+). 1-deoxy-D-xylulose 5-phosphate is bound by residues S132, E133, S155, and H178. E133 provides a ligand contact to Mn(2+). Residue G184 coordinates NADPH. 1-deoxy-D-xylulose 5-phosphate-binding residues include S191, N196, K197, and E200. E200 contacts Mn(2+).

This sequence belongs to the DXR family. It depends on Mg(2+) as a cofactor. Mn(2+) is required as a cofactor.

The enzyme catalyses 2-C-methyl-D-erythritol 4-phosphate + NADP(+) = 1-deoxy-D-xylulose 5-phosphate + NADPH + H(+). The protein operates within isoprenoid biosynthesis; isopentenyl diphosphate biosynthesis via DXP pathway; isopentenyl diphosphate from 1-deoxy-D-xylulose 5-phosphate: step 1/6. Catalyzes the NADPH-dependent rearrangement and reduction of 1-deoxy-D-xylulose-5-phosphate (DXP) to 2-C-methyl-D-erythritol 4-phosphate (MEP). This is 1-deoxy-D-xylulose 5-phosphate reductoisomerase from Campylobacter jejuni subsp. doylei (strain ATCC BAA-1458 / RM4099 / 269.97).